Here is a 192-residue protein sequence, read N- to C-terminus: Orotate phosphoribosyltransferase (192 aa).

116–124 is a binding site for 5-phospho-alpha-D-ribose 1-diphosphate; that stretch reads EDIVTTGLS. 2 residues coordinate orotate: Thr120 and Arg148.

It belongs to the purine/pyrimidine phosphoribosyltransferase family. PyrE subfamily. In terms of assembly, homodimer. It depends on Mg(2+) as a cofactor.

The catalysed reaction is orotidine 5'-phosphate + diphosphate = orotate + 5-phospho-alpha-D-ribose 1-diphosphate. The protein operates within pyrimidine metabolism; UMP biosynthesis via de novo pathway; UMP from orotate: step 1/2. Functionally, catalyzes the transfer of a ribosyl phosphate group from 5-phosphoribose 1-diphosphate to orotate, leading to the formation of orotidine monophosphate (OMP). The sequence is that of Orotate phosphoribosyltransferase from Bartonella quintana (strain Toulouse) (Rochalimaea quintana).